Consider the following 148-residue polypeptide: MAIANNKKAFHDFFIEDRIEAGLVLEGWEVKAIRAARVQLKESYIYWKKDAFYLVGCHITALPTASTHIKPDAVRPRKLLLNQSEINKLIGKTERAGYTIVPLDLHFSRGKIKMEIGLAKGKKQHDKRQSMKEADWKREKQRLIKHTR.

The tract at residues 119–148 (AKGKKQHDKRQSMKEADWKREKQRLIKHTR) is disordered. The segment covering 127 to 142 (KRQSMKEADWKREKQR) has biased composition (basic and acidic residues).

The protein belongs to the SmpB family.

It localises to the cytoplasm. Functionally, required for rescue of stalled ribosomes mediated by trans-translation. Binds to transfer-messenger RNA (tmRNA), required for stable association of tmRNA with ribosomes. tmRNA and SmpB together mimic tRNA shape, replacing the anticodon stem-loop with SmpB. tmRNA is encoded by the ssrA gene; the 2 termini fold to resemble tRNA(Ala) and it encodes a 'tag peptide', a short internal open reading frame. During trans-translation Ala-aminoacylated tmRNA acts like a tRNA, entering the A-site of stalled ribosomes, displacing the stalled mRNA. The ribosome then switches to translate the ORF on the tmRNA; the nascent peptide is terminated with the 'tag peptide' encoded by the tmRNA and targeted for degradation. The ribosome is freed to recommence translation, which seems to be the essential function of trans-translation. The sequence is that of SsrA-binding protein from Neisseria meningitidis serogroup C (strain 053442).